A 343-amino-acid polypeptide reads, in one-letter code: MNNKMLGVIDATTYIEALEPLIEQRSIAAVPFAGRYRLIDFVLSSMVNSGIESVAIFPKYQYRSLMDHLGSGKNWDLNRKRDGLFFFPSPDLLFSGERRVGAFAHFEQHIDYFLRSRQKYAVIANGYTVCNIDFDAVLNRHIENGCDVTEIRHRGRSLEMYLLETSLLLDLIADYKNHGYYSIVDVIRDYHRSLSICEYEYSGYAAVIDSVEQYFRSSMELLDRDVWEQLFLPSHPIYTKVKDEPPTKYGREGNVKRSMIANGCVIEGTVENSVLFRSVKIGKGAVVRNSIIMQKCQIGDGCVLDGVIIDKDAKVEPGVVLKGTKEQPFIVRKGTVQGEVISR.

The protein belongs to the bacterial/plant glucose-1-phosphate adenylyltransferase family.

Functionally, required for the synthesis of glycogen. The protein is Glycogen biosynthesis protein GlgD (glgD) of Geobacillus stearothermophilus (Bacillus stearothermophilus).